The chain runs to 430 residues: Probable proton-coupled zinc antiporter SLC30A4 (430 aa).

Residues 1-113 lie on the Cytoplasmic side of the membrane; it reads MAGPGAWKRL…LLKQRKVKTR (113 aa). Position 36 is a phosphoserine (S36). The helical transmembrane segment at 114–134 threads the bilayer; the sequence is LTIAAVLYLLFMIGELVGGYM. Topologically, residues 135–143 are lumenal; the sequence is ANSLAIMTD. The chain crosses the membrane as a helical span at residues 144 to 164; that stretch reads ALHMLTDLSAIILTLLALWLS. Zn(2+)-binding residues include H146 and D150. The Cytoplasmic portion of the chain corresponds to 165-178; the sequence is SKSPTRRFTFGFHR. Residues 179 to 199 form a helical membrane-spanning segment; it reads LEVLSAMISVMLVYVLMGFLL. The Lumenal segment spans residues 200 to 216; the sequence is YEAVQRTIHMNYEINGD. The helical transmembrane segment at 217-237 threads the bilayer; sequence VMLITAAVGVAVNVIMGFLLN. Residues 238–275 lie on the Cytoplasmic side of the membrane; the sequence is QSGHHHSHAHSHSLPSNSPSMVSSGHNHGQDSLAVRAA. The interval 240–265 is zinc binding; that stretch reads GHHHSHAHSHSLPSNSPSMVSSGHNH. The segment at 245 to 264 is disordered; sequence HAHSHSLPSNSPSMVSSGHN. Positions 249 to 263 are enriched in low complexity; the sequence is HSLPSNSPSMVSSGH. Residues 276–296 form a helical membrane-spanning segment; that stretch reads FVHALGDLVQSVGVLIAAYII. Zn(2+) is bound by residues H278 and D282. The Lumenal portion of the chain corresponds to 297–311; that stretch reads RFKPEYKIADPICTY. A helical transmembrane segment spans residues 312–332; the sequence is IFSLLVAFTTFRIIWDTVVII. The Cytoplasmic segment spans residues 333–430; the sequence is LEGVPSHLNV…TCANCHSSST (98 aa).

The protein belongs to the cation diffusion facilitator (CDF) transporter (TC 2.A.4) family. SLC30A subfamily. In terms of assembly, homodimerization could regulate efficiency for zinc transport. Interacts with TMEM163. In terms of tissue distribution, widely expressed. Highly expressed in the brain and in mammary epithelial cell lines.

Its subcellular location is the endosome membrane. It is found in the late endosome membrane. The protein localises to the lysosome membrane. It carries out the reaction Zn(2+)(in) + 2 H(+)(out) = Zn(2+)(out) + 2 H(+)(in). In terms of biological role, probable proton-coupled zinc ion antiporter mediating zinc import from cytoplasm potentially into the endocytic compartment. Controls zinc deposition in milk. The chain is Probable proton-coupled zinc antiporter SLC30A4 from Mus musculus (Mouse).